A 682-amino-acid chain; its full sequence is DNA-directed RNA polymerase subunit beta' (682 aa).

Zn(2+)-binding residues include Cys-69, Cys-71, Cys-87, and Cys-90. Residues Asp-489, Asp-491, and Asp-493 each contribute to the Mg(2+) site.

This sequence belongs to the RNA polymerase beta' chain family. RpoC1 subfamily. As to quaternary structure, in plastids the minimal PEP RNA polymerase catalytic core is composed of four subunits: alpha, beta, beta', and beta''. When a (nuclear-encoded) sigma factor is associated with the core the holoenzyme is formed, which can initiate transcription. It depends on Mg(2+) as a cofactor. Requires Zn(2+) as cofactor.

It localises to the plastid. The protein localises to the chloroplast. It carries out the reaction RNA(n) + a ribonucleoside 5'-triphosphate = RNA(n+1) + diphosphate. Functionally, DNA-dependent RNA polymerase catalyzes the transcription of DNA into RNA using the four ribonucleoside triphosphates as substrates. This chain is DNA-directed RNA polymerase subunit beta', found in Vitis vinifera (Grape).